The primary structure comprises 134 residues: Large ribosomal subunit protein eL14y (134 aa).

Belongs to the eukaryotic ribosomal protein eL14 family.

In Arabidopsis thaliana (Mouse-ear cress), this protein is Large ribosomal subunit protein eL14y (RPL14B).